The sequence spans 45 residues: Large ribosomal subunit protein bL36 (45 aa).

The disordered stretch occupies residues 26–45 (VINKKDPNRKQRQKGPARKK). Residues 35-45 (KQRQKGPARKK) are compositionally biased toward basic residues.

The protein belongs to the bacterial ribosomal protein bL36 family.

The sequence is that of Large ribosomal subunit protein bL36 from Protochlamydia amoebophila (strain UWE25).